The primary structure comprises 189 residues: B3 domain-containing protein At2g32645 (189 aa).

Positions phenylalanine 33–isoleucine 133 form a DNA-binding region, TF-B3.

The protein localises to the nucleus. The polypeptide is B3 domain-containing protein At2g32645 (Arabidopsis thaliana (Mouse-ear cress)).